A 143-amino-acid chain; its full sequence is Small ribosomal subunit protein uS11c (143 aa).

This sequence belongs to the universal ribosomal protein uS11 family. In terms of assembly, part of the 30S ribosomal subunit.

It localises to the plastid. It is found in the chloroplast. The sequence is that of Small ribosomal subunit protein uS11c from Hordeum vulgare (Barley).